Here is a 299-residue protein sequence, read N- to C-terminus: uncharacterized protein (299 aa).

6 helical membrane-spanning segments follow: residues 32–52, 56–76, 199–219, 220–240, 246–266, and 273–293; these read FILL…YLHL, SMII…SILY, LAIG…LLGA, YLIA…VKPE, FEIV…PIFG, and FLIS…ILKF.

The protein localises to the cell membrane. This is an uncharacterized protein from Methanocaldococcus jannaschii (strain ATCC 43067 / DSM 2661 / JAL-1 / JCM 10045 / NBRC 100440) (Methanococcus jannaschii).